Consider the following 275-residue polypeptide: Peptidoglycan-N-acetylglucosamine deacetylase BC_1960 (275 aa).

The 182-residue stretch at 81–262 (AEVALTFDDG…QLKTKGARFV (182 aa)) folds into the NodB homology domain. Catalysis depends on D88, which acts as the Proton acceptor. D89, H139, and H143 together coordinate Zn(2+). 2-hydroxyproline; partial is present on P179. Catalysis depends on H233, which acts as the Proton donor.

The protein belongs to the polysaccharide deacetylase family. Zn(2+) serves as cofactor. In terms of processing, hydroxylated on Pro-179. Hydroxylation alters the active site and enhances significantly deacetylase activity, probably by creating a more favorable environment for transition-state stabilization. It might be autocatalytic.

The enzyme catalyses peptidoglycan-N-acetyl-D-glucosamine + H2O = peptidoglycan-D-glucosamine + acetate.. Its activity is regulated as follows. Deacetylase activity is stimulated by hydroxylation on Pro-179. Inhibited by CuCl(2) and ZnCl(2). Inhibited by the hydroxamate N-hydroxy-4-(naphthalene-1-yl)benzamide (NHNB). Its function is as follows. Catalyzes the deacetylation of N-acetylglucosamine (GlcNAc) residues in peptidoglycan. Also acts on soluble chitin substrates and N-acetylchitooligomers. Acts on cell wall peptidoglycan from the Gram-positive bacteria B.cereus and B.subtilis and the Gram-negative bacterium H.pylori. Not active on acetylated xylan. The polypeptide is Peptidoglycan-N-acetylglucosamine deacetylase BC_1960 (Bacillus cereus (strain ATCC 14579 / DSM 31 / CCUG 7414 / JCM 2152 / NBRC 15305 / NCIMB 9373 / NCTC 2599 / NRRL B-3711)).